Here is a 272-residue protein sequence, read N- to C-terminus: MLFRYITFHREKVLYLTAACIFGVYISLHDACIPVVGKIGTNVTLNAVDVLPPRDQVRWSYGPGGQGYMLCIFTGTSTTTFNNTRFNFSCLSNYSLLLINVTTQYSTTYRTMTSLDHWLHQRHNHGSRWTLDTCYNLTVNENGTFPTTTTKKPTTTTRTTTTTTQRTTTTRTTTTAKKTTISTTHHKHPSPKKSTTPNSHVEHHVGFEATAAETPLQPSPQHQHLATHALWVLAVVIVIIIIIIFYFRIPQKLWLLWQHDKHGIVLIPQTDL.

The N-terminal stretch at 1 to 31 is a signal peptide; it reads MLFRYITFHREKVLYLTAACIFGVYISLHDA. Residues 32–224 are Extracellular-facing; sequence CIPVVGKIGT…PLQPSPQHQH (193 aa). 4 N-linked (GlcNAc...) asparagine; by host glycosylation sites follow: Asn-42, Asn-93, Asn-100, and Asn-142. The disordered stretch occupies residues 142 to 200; sequence NGTFPTTTTKKPTTTTRTTTTTTQRTTTTRTTTTAKKTTISTTHHKHPSPKKSTTPNSH. Over residues 147-183 the composition is skewed to low complexity; the sequence is TTTTKKPTTTTRTTTTTTQRTTTTRTTTTAKKTTIST. Residues 225 to 245 traverse the membrane as a helical segment; the sequence is LATHALWVLAVVIVIIIIIIF. The Cytoplasmic segment spans residues 246–272; sequence YFRIPQKLWLLWQHDKHGIVLIPQTDL.

This sequence belongs to the RL11 family. As to quaternary structure, interacts with host PTPRC; this interaction affects T-cell signaling. In terms of processing, glycosylated.

The protein resides in the host cell membrane. The protein localises to the host endoplasmic reticulum. Its function is as follows. Plays a role in the modulation of host immune response by modulating T-cell function. Interacts with host PTPRC/CD45 and thereby reduces host TCR signaling and T-cell proliferation. The polypeptide is Protein UL11 (UL11) (Human cytomegalovirus (strain Merlin) (HHV-5)).